Here is a 232-residue protein sequence, read N- to C-terminus: Ion-translocating oxidoreductase complex subunit E (232 aa).

Helical transmembrane passes span 39–59 (LGLG…ISSL), 69–89 (IPIY…LINA), 92–112 (FGLY…CIVV), 125–145 (ALSA…MFVL), and 182–202 (PFLL…MLAV).

The protein belongs to the NqrDE/RnfAE family. The complex is composed of six subunits: RnfA, RnfB, RnfC, RnfD, RnfE and RnfG.

The protein localises to the cell inner membrane. Its function is as follows. Part of a membrane-bound complex that couples electron transfer with translocation of ions across the membrane. The chain is Ion-translocating oxidoreductase complex subunit E from Klebsiella pneumoniae (strain 342).